The following is a 161-amino-acid chain: Anaerobic nitrite reductase Hb2 (161 aa).

Positions 8-157 (GFSEEQEALV…LVDAIKSEMK (150 aa)) constitute a Globin domain. The short motif at 41 to 45 (EIAPS) is the Homodimerization element. Ser-51, Lys-65, His-69, Lys-99, Thr-103, and His-104 together coordinate heme b. Positions 111 to 123 (NEHFEVTKFALLE) match the Homodimerization motif.

This sequence belongs to the plant globin family. Homodimer. The cofactor is heme b. In terms of tissue distribution, predominantly expressed in roots, cotyledons, stems and nodules (confined to some cells associated with the nitrogen-fixing Bradyrhizobium symbiont), and, to a lower extent, in flowers, young leaves, pods and seeds.

It is found in the cytoplasm. Its subcellular location is the nucleus. It catalyses the reaction Fe(III)-heme b-[protein] + nitric oxide + H2O = Fe(II)-heme b-[protein] + nitrite + 2 H(+). In terms of biological role, phytoglobin that reduces nitrite to nitric oxide (NO) under anoxic conditions (e.g. during flooding or in waterlogged soil) and upon root nodulation. Required for general plant development and during nodulation, especially for the onset of symbiosis. Monitors nitric oxide (NO) levels during early phase of the nitrogen-fixing symbiosis and buffers oxygen in functioning nodules. May not function as an oxygen storage or transport protein. Has an unusually high affinity for O(2) through a hexacoordinate heme iron because of a very low dissociation constant. Involved in water stress tolerance. This is Anaerobic nitrite reductase Hb2 from Glycine max (Soybean).